Here is a 271-residue protein sequence, read N- to C-terminus: Type III pantothenate kinase (271 aa).

ATP is bound at residue 6–13 (DVRNTHTV). Position 109–112 (109–112 (GADR)) interacts with substrate. Catalysis depends on D111, which acts as the Proton acceptor. Position 131 (D131) interacts with K(+). S134 serves as a coordination point for ATP. Substrate is bound at residue T186.

The protein belongs to the type III pantothenate kinase family. As to quaternary structure, homodimer. NH4(+) serves as cofactor. Requires K(+) as cofactor.

The protein localises to the cytoplasm. The enzyme catalyses (R)-pantothenate + ATP = (R)-4'-phosphopantothenate + ADP + H(+). Its pathway is cofactor biosynthesis; coenzyme A biosynthesis; CoA from (R)-pantothenate: step 1/5. In terms of biological role, catalyzes the phosphorylation of pantothenate (Pan), the first step in CoA biosynthesis. The polypeptide is Type III pantothenate kinase (Mycobacteroides abscessus (strain ATCC 19977 / DSM 44196 / CCUG 20993 / CIP 104536 / JCM 13569 / NCTC 13031 / TMC 1543 / L948) (Mycobacterium abscessus)).